A 997-amino-acid polypeptide reads, in one-letter code: RNA2 polyprotein (997 aa).

The tract at residues 370–376 (KVVSVKG) is involved in tubule formation by the movement protein.

In terms of assembly, interacts with the large capsid protein. Interacts with the small capsid protein. Homomultimer; assembles as pentons. Interacts with the movement protein (via C-terminus). As to quaternary structure, interacts (via C-terminus) with the large capsid protein. Specific enzymatic cleavages by picornain 3C-like protease in vivo yield mature proteins.

Its subcellular location is the host cell junction. The protein resides in the host plasmodesma. The protein localises to the virion. In terms of biological role, responsible for viral RNA2 accumulation. May function by recruiting the RNA1-encoded polyprotein that contains the replication protein to RNA2 and enable its replication. Functionally, transports the viral genome to neighboring plant cells directly through plasmosdesmata, without any budding. The movement protein allows efficient cell to cell propagation, by bypassing the host cell wall barrier. Acts by forming a tubular structure at the host plasmodesmata, enlarging it enough to allow free passage of virion capsids. Binds to GTP and to single-stranded RNA and single-stranded DNA in a non-sequence-specific manner. Its function is as follows. Together with the small capsid protein, forms an icosahedral capsid (T=3) enclosing the viral positive strand RNA genome, with a diameter of approximately 300 Angstroms. The capsid is formed from 60 copies each of the large and the small capsid protein. The large capsid protein interacts with the viral RNA. Together with the large capsid protein, forms an icosahedral capsid (T=3) enclosing the viral positive strand RNA genome, with a diameter of approximately 300 Angstroms. The capsid is formed from 60 copies each of the large and the small capsid protein. The small capsid protein forms the turrets at the fivefold axes of the viral particle. Also seems to act as suppressor of post-transcriptional gene silencing (PTGS), a mechanism of plant viral defense that limits the accumulation of viral RNAs. This Andean potato mottle virus (APMV) protein is RNA2 polyprotein.